We begin with the raw amino-acid sequence, 333 residues long: tRNA N6-adenosine threonylcarbamoyltransferase (333 aa).

Positions 111 and 115 each coordinate Fe cation. Substrate is bound by residues 134 to 138 (LVSGG), Asp-167, Gly-180, and Asn-272. Asp-300 contributes to the Fe cation binding site.

The protein belongs to the KAE1 / TsaD family. Fe(2+) is required as a cofactor.

Its subcellular location is the cytoplasm. It carries out the reaction L-threonylcarbamoyladenylate + adenosine(37) in tRNA = N(6)-L-threonylcarbamoyladenosine(37) in tRNA + AMP + H(+). Required for the formation of a threonylcarbamoyl group on adenosine at position 37 (t(6)A37) in tRNAs that read codons beginning with adenine. Is involved in the transfer of the threonylcarbamoyl moiety of threonylcarbamoyl-AMP (TC-AMP) to the N6 group of A37, together with TsaE and TsaB. TsaD likely plays a direct catalytic role in this reaction. The sequence is that of tRNA N6-adenosine threonylcarbamoyltransferase from Legionella pneumophila (strain Lens).